A 158-amino-acid polypeptide reads, in one-letter code: Cyclic pyranopterin monophosphate synthase (158 aa).

Substrate-binding positions include 75 to 77 (LCH) and 113 to 114 (ME). Asp128 is an active-site residue.

It belongs to the MoaC family. As to quaternary structure, homohexamer; trimer of dimers.

The enzyme catalyses (8S)-3',8-cyclo-7,8-dihydroguanosine 5'-triphosphate = cyclic pyranopterin phosphate + diphosphate. It participates in cofactor biosynthesis; molybdopterin biosynthesis. Its function is as follows. Catalyzes the conversion of (8S)-3',8-cyclo-7,8-dihydroguanosine 5'-triphosphate to cyclic pyranopterin monophosphate (cPMP). The protein is Cyclic pyranopterin monophosphate synthase of Actinobacillus succinogenes (strain ATCC 55618 / DSM 22257 / CCUG 43843 / 130Z).